We begin with the raw amino-acid sequence, 293 residues long: NAD-dependent protein deacetylase (293 aa).

The 284-residue stretch at 1 to 284 (MTVAITQTGP…QPPDPLHTAT (284 aa)) folds into the Deacetylase sirtuin-type domain. Residues 27–47 (GAGCSTDSGIPDYRDLHGGWK) and 105–108 (QNVD) contribute to the NAD(+) site. The Proton acceptor role is filled by His-123. Residues Cys-131, Cys-134, Cys-182, and Cys-185 each contribute to the Zn(2+) site. NAD(+) contacts are provided by residues 222 to 224 (GSS), 248 to 250 (NFG), and Cys-266.

The protein belongs to the sirtuin family. Class II subfamily. Zn(2+) serves as cofactor.

Its subcellular location is the cytoplasm. The enzyme catalyses N(6)-acetyl-L-lysyl-[protein] + NAD(+) + H2O = 2''-O-acetyl-ADP-D-ribose + nicotinamide + L-lysyl-[protein]. Functionally, NAD-dependent protein deacetylase which modulates the activities of several enzymes which are inactive in their acetylated form. The chain is NAD-dependent protein deacetylase from Xanthomonas campestris pv. campestris (strain B100).